We begin with the raw amino-acid sequence, 125 residues long: Probable 4-amino-4-deoxy-L-arabinose-phosphoundecaprenol flippase subunit ArnF (125 aa).

At 1–2 (MG) the chain is on the cytoplasmic side. Residues 3-23 (VMWGLISVAIASLAQLSLGFA) traverse the membrane as a helical segment. Over 24-33 (MMRLPSIAHP) the chain is Periplasmic. A helical transmembrane segment spans residues 34-54 (LAFISGLGAFNAATLALFAGL). Over 55-76 (AGYLVSVFCWQKTLHTLALSKA) the chain is Cytoplasmic. A helical membrane pass occupies residues 77–97 (YALLSLSYVLVWVASMLLPGL). Topologically, residues 98–100 (QGA) are periplasmic. A helical transmembrane segment spans residues 101–121 (FSLKAMLGVLCIMAGVMLIFL). Topologically, residues 122 to 125 (PARS) are cytoplasmic.

The protein belongs to the ArnF family. In terms of assembly, heterodimer of ArnE and ArnF.

It localises to the cell inner membrane. It functions in the pathway bacterial outer membrane biogenesis; lipopolysaccharide biosynthesis. Functionally, translocates 4-amino-4-deoxy-L-arabinose-phosphoundecaprenol (alpha-L-Ara4N-phosphoundecaprenol) from the cytoplasmic to the periplasmic side of the inner membrane. The sequence is that of Probable 4-amino-4-deoxy-L-arabinose-phosphoundecaprenol flippase subunit ArnF from Salmonella choleraesuis (strain SC-B67).